The following is a 63-amino-acid chain: Putative transmembrane protein ORF63 (63 aa).

Over 1–8 (MQSGNFTL) the chain is Extracellular. A helical membrane pass occupies residues 9–29 (EVIMYLINSILAFIMIFFTFV). Residues 30–31 (NP) are Cytoplasmic-facing. A helical transmembrane segment spans residues 32 to 52 (SLLKCQYWTYILVALITAIIF). Residues 53–63 (HTGSKVGKSSG) lie on the Extracellular side of the membrane.

Its subcellular location is the host membrane. In Acidianus filamentous virus 1 (isolate United States/Yellowstone) (AFV-1), this protein is Putative transmembrane protein ORF63.